A 172-amino-acid polypeptide reads, in one-letter code: Translation initiation factor IF-3 (172 aa).

The protein belongs to the IF-3 family. Monomer.

It localises to the cytoplasm. IF-3 binds to the 30S ribosomal subunit and shifts the equilibrium between 70S ribosomes and their 50S and 30S subunits in favor of the free subunits, thus enhancing the availability of 30S subunits on which protein synthesis initiation begins. The protein is Translation initiation factor IF-3 of Campylobacter curvus (strain 525.92).